A 20-amino-acid chain; its full sequence is Toxin CpTx-4a (20 aa).

This sequence belongs to the spider toxin CSTX family. In terms of tissue distribution, expressed by the venom gland.

The protein localises to the secreted. Functionally, spider venom toxin that exhibits cytolytic activity by forming an alpha-helix across the membrane. Lethal to insect larvae. The polypeptide is Toxin CpTx-4a (Cheiracanthium punctorium (Yellow sac spider)).